A 767-amino-acid chain; its full sequence is DNA topoisomerase 1 (767 aa).

The segment covering 1–23 (MSGDHLHNDSQIEADFRLNDSHK) has biased composition (basic and acidic residues). A disordered region spans residues 1–201 (MSGDHLHNDS…NKKKKPKKEE (201 aa)). Ser2 bears the N-acetylserine mark. A phosphoserine mark is found at Ser2 and Ser10. Positions 24–39 (HKDKHKDREHRHKEHK) are enriched in basic residues. Basic and acidic residues predominate over residues 40–110 (KDKEKDREKS…DAKIKKEKEN (71 aa)). Ser59 carries the phosphoserine modification. Lys103 is covalently cross-linked (Glycyl lysine isopeptide (Lys-Gly) (interchain with G-Cter in SUMO2)). Lys105 is covalently cross-linked (Glycyl lysine isopeptide (Lys-Gly) (interchain with G-Cter in SUMO); alternate). Lys105 is covalently cross-linked (Glycyl lysine isopeptide (Lys-Gly) (interchain with G-Cter in SUMO2); alternate). Position 114 is a phosphoserine (Ser114). Residue Lys119 forms a Glycyl lysine isopeptide (Lys-Gly) (interchain with G-Cter in SUMO); alternate linkage. Lys119 is covalently cross-linked (Glycyl lysine isopeptide (Lys-Gly) (interchain with G-Cter in SUMO2); alternate). Residue Lys119 forms a Glycyl lysine isopeptide (Lys-Gly) (interchain with G-Cter in SUMO1); alternate linkage. Residues 131-168 (PKEDIKPLKRPRDEDDADYKPKKIKTEDIKKEKKRKLE) show a composition bias toward basic and acidic residues. Glycyl lysine isopeptide (Lys-Gly) (interchain with G-Cter in SUMO2) cross-links involve residues Lys136 and Lys150. Lys155 is covalently cross-linked (Glycyl lysine isopeptide (Lys-Gly) (interchain with G-Cter in SUMO); alternate). Lys155 participates in a covalent cross-link: Glycyl lysine isopeptide (Lys-Gly) (interchain with G-Cter in SUMO2); alternate. Residues Lys160 and Lys166 each participate in a glycyl lysine isopeptide (Lys-Gly) (interchain with G-Cter in SUMO2) cross-link. A Glycyl lysine isopeptide (Lys-Gly) (interchain with G-Cter in SUMO2); alternate cross-link involves residue Lys174. N6-acetyllysine; alternate is present on Lys174. A compositionally biased stretch (basic and acidic residues) spans 181 to 201 (KDKDKKVPEPDNKKKKPKKEE). Lys206 participates in a covalent cross-link: Glycyl lysine isopeptide (Lys-Gly) (interchain with G-Cter in SUMO2). At Lys282 the chain carries N6-acetyllysine. Residue Lys338 forms a Glycyl lysine isopeptide (Lys-Gly) (interchain with G-Cter in SUMO2) linkage. 2 interaction with DNA regions span residues 427–428 (KY) and 490–495 (RAGNEK). Residues 434–767 (SSRIKGEKDW…IDMADEDYEF (334 aa)) form the Topo IB-type catalytic domain. Ser508 carries the post-translational modification Phosphoserine; by CK2. Lys551 is covalently cross-linked (Glycyl lysine isopeptide (Lys-Gly) (interchain with G-Cter in SUMO2)). Positions 587-589 (TAK) are interaction with DNA. Glycyl lysine isopeptide (Lys-Gly) (interchain with G-Cter in SUMO2) cross-links involve residues Lys644, Lys702, and Lys714. Catalysis depends on Tyr725, which acts as the O-(3'-phospho-DNA)-tyrosine intermediate.

Belongs to the type IB topoisomerase family. As to quaternary structure, monomer. Interacts with ERCC6. Interacts with TPRN; TPRN interacts with a number of DNA damage response proteins, is recruited to sites of DNA damage and may play a role in DNA damage repair. Sumoylated. Lys-119 is the main site of sumoylation. Sumoylation plays a role in partitioning TOP1 between nucleoli and nucleoplasm. Levels are dramatically increased on camptothecin (CPT) treatment. In terms of processing, phosphorylation at Ser-508 by CK2 increases binding to supercoiled DNA and sensitivity to camptothecin.

It localises to the nucleus. Its subcellular location is the nucleolus. The protein localises to the nucleoplasm. It carries out the reaction ATP-independent breakage of single-stranded DNA, followed by passage and rejoining.. Its activity is regulated as follows. Specifically inhibited by camptothecin (CPT), a plant alkaloid with antitumor activity. In terms of biological role, releases the supercoiling and torsional tension of DNA introduced during the DNA replication and transcription by transiently cleaving and rejoining one strand of the DNA duplex. Introduces a single-strand break via transesterification at a target site in duplex DNA. The scissile phosphodiester is attacked by the catalytic tyrosine of the enzyme, resulting in the formation of a DNA-(3'-phosphotyrosyl)-enzyme intermediate and the expulsion of a 5'-OH DNA strand. The free DNA strand then rotates around the intact phosphodiester bond on the opposing strand, thus removing DNA supercoils. Finally, in the religation step, the DNA 5'-OH attacks the covalent intermediate to expel the active-site tyrosine and restore the DNA phosphodiester backbone. Regulates the alternative splicing of tissue factor (F3) pre-mRNA in endothelial cells. Involved in the circadian transcription of the core circadian clock component BMAL1 by altering the chromatin structure around the ROR response elements (ROREs) on the BMAL1 promoter. This chain is DNA topoisomerase 1 (TOP1), found in Chlorocebus aethiops (Green monkey).